The primary structure comprises 512 residues: D-alanine--D-alanyl carrier protein ligase (512 aa).

T152–S153 is a binding site for ATP. D199 contacts D-alanine. Residue N294–T299 coordinates ATP. A D-alanine-binding site is contributed by V303. ATP-binding positions include D385, Y397–R400, and K499. K499 is a binding site for D-alanine.

The protein belongs to the ATP-dependent AMP-binding enzyme family. DltA subfamily.

The protein resides in the cytoplasm. It catalyses the reaction holo-[D-alanyl-carrier protein] + D-alanine + ATP = D-alanyl-[D-alanyl-carrier protein] + AMP + diphosphate. The protein operates within cell wall biogenesis; lipoteichoic acid biosynthesis. Catalyzes the first step in the D-alanylation of lipoteichoic acid (LTA), the activation of D-alanine and its transfer onto the D-alanyl carrier protein (Dcp) DltC. In an ATP-dependent two-step reaction, forms a high energy D-alanyl-AMP intermediate, followed by transfer of the D-alanyl residue as a thiol ester to the phosphopantheinyl prosthetic group of the Dcp. D-alanylation of LTA plays an important role in modulating the properties of the cell wall in Gram-positive bacteria, influencing the net charge of the cell wall. The protein is D-alanine--D-alanyl carrier protein ligase of Streptococcus pyogenes serotype M49 (strain NZ131).